We begin with the raw amino-acid sequence, 141 residues long: ATP synthase epsilon chain (141 aa).

This sequence belongs to the ATPase epsilon chain family. F-type ATPases have 2 components, CF(1) - the catalytic core - and CF(0) - the membrane proton channel. CF(1) has five subunits: alpha(3), beta(3), gamma(1), delta(1), epsilon(1). CF(0) has three main subunits: a, b and c.

Its subcellular location is the cell inner membrane. Its function is as follows. Produces ATP from ADP in the presence of a proton gradient across the membrane. In Burkholderia multivorans (strain ATCC 17616 / 249), this protein is ATP synthase epsilon chain.